We begin with the raw amino-acid sequence, 153 residues long: MPYSTFPLLWVLGLLALSSACYIQNCPRGGKRSFPDLPRQCMSCGPGDRGRCFGPNICCGEGMGCYMGSPEAAGCVEENYLPSPCEAGGRVCGSEGSCAASGVCCDSESCVLDPDCLEDSKRQSPSEQNAALMGGLAGDLLRILHATSRGRPQ.

The first 20 residues, 1–20 (MPYSTFPLLWVLGLLALSSA), serve as a signal peptide directing secretion. Residues C21 and C26 are joined by a disulfide bond. The residue at position 29 (G29) is a Glycine amide. Cystine bridges form between C41–C85, C44–C58, C52–C75, C59–C65, C92–C104, C98–C116, and C105–C110.

It belongs to the vasopressin/oxytocin family. Post-translationally, seven disulfide bonds are present in neurophysin.

Its subcellular location is the secreted. Vasotocin is an antidiuretic hormone. The protein is Vasotocin-neurophysin VT 1 of Oncorhynchus keta (Chum salmon).